The following is a 184-amino-acid chain: uncharacterized protein (184 aa).

The protein belongs to the TorD/DmsD family.

This is an uncharacterized protein from Haemophilus influenzae (strain ATCC 51907 / DSM 11121 / KW20 / Rd).